The sequence spans 396 residues: L-lactate dehydrogenase (396 aa).

One can recognise an FMN hydroxy acid dehydrogenase domain in the interval M1 to G380. Residue Y24 participates in substrate binding. Positions 106 and 127 each coordinate FMN. Residue Y129 participates in substrate binding. T155 serves as a coordination point for FMN. R164 contributes to the substrate binding site. K251 contributes to the FMN binding site. Catalysis depends on H275, which acts as the Proton acceptor. R278 is a binding site for substrate. D306–R330 contributes to the FMN binding site.

The protein belongs to the FMN-dependent alpha-hydroxy acid dehydrogenase family. Requires FMN as cofactor.

It localises to the cell inner membrane. It catalyses the reaction (S)-lactate + A = pyruvate + AH2. Its function is as follows. Catalyzes the conversion of L-lactate to pyruvate. Is coupled to the respiratory chain. The protein is L-lactate dehydrogenase of Escherichia coli O45:K1 (strain S88 / ExPEC).